Reading from the N-terminus, the 513-residue chain is Na(+)/H(+) antiporter NhaB (513 aa).

The next 11 helical transmembrane spans lie at 21–41 (LCIITFLVINPLIYFFVSPFI), 43–63 (GWTLVAEFIFTLSMALKCYPL), 88–108 (IIANFEVILLLMFMVAGIYFM), 137–157 (AAFLSAFLDALTVIAVIISVG), 202–222 (LLMHAAVGSALGGVMTMVGEP), 235–255 (FIEFLIRVAPVSLPVLICGIA), 299–318 (MAIQALAGIWLIVGLALHLA), 322–344 (IIGLTIIIICTAFCGITDEHAIG), 350–370 (PMPFTALIVVFFTIVAVIVDL), 389–409 (LALFYVFNGLLSMISDNVFVG), and 477–497 (MALPYTIVLSIVGFFALEYLL).

Belongs to the NhaB Na(+)/H(+) (TC 2.A.34) antiporter family.

It localises to the cell inner membrane. The enzyme catalyses 2 Na(+)(in) + 3 H(+)(out) = 2 Na(+)(out) + 3 H(+)(in). In terms of biological role, na(+)/H(+) antiporter that extrudes sodium in exchange for external protons. In Haemophilus ducreyi (strain 35000HP / ATCC 700724), this protein is Na(+)/H(+) antiporter NhaB.